The primary structure comprises 89 residues: Small ribosomal subunit protein uS17 (89 aa).

This sequence belongs to the universal ribosomal protein uS17 family. As to quaternary structure, part of the 30S ribosomal subunit.

Functionally, one of the primary rRNA binding proteins, it binds specifically to the 5'-end of 16S ribosomal RNA. In Ralstonia pickettii (strain 12J), this protein is Small ribosomal subunit protein uS17.